The following is a 281-amino-acid chain: ATP phosphoribosyltransferase (281 aa).

Belongs to the ATP phosphoribosyltransferase family. Long subfamily. It depends on Mg(2+) as a cofactor.

It localises to the cytoplasm. The enzyme catalyses 1-(5-phospho-beta-D-ribosyl)-ATP + diphosphate = 5-phospho-alpha-D-ribose 1-diphosphate + ATP. It functions in the pathway amino-acid biosynthesis; L-histidine biosynthesis; L-histidine from 5-phospho-alpha-D-ribose 1-diphosphate: step 1/9. With respect to regulation, feedback inhibited by histidine. Catalyzes the condensation of ATP and 5-phosphoribose 1-diphosphate to form N'-(5'-phosphoribosyl)-ATP (PR-ATP). Has a crucial role in the pathway because the rate of histidine biosynthesis seems to be controlled primarily by regulation of HisG enzymatic activity. This is ATP phosphoribosyltransferase from Salinispora tropica (strain ATCC BAA-916 / DSM 44818 / JCM 13857 / NBRC 105044 / CNB-440).